A 128-amino-acid polypeptide reads, in one-letter code: Otoraplin (128 aa).

The N-terminal stretch at 1–17 (MARILLLFLPGLVAVCA) is a signal peptide. Disulfide bonds link cysteine 32–cysteine 37 and cysteine 55–cysteine 127. One can recognise an SH3 domain in the interval 39–110 (YTISLASAQE…PRNLVKEQRV (72 aa)).

The protein belongs to the MIA/OTOR family. As to expression, highly expressed in cochlea.

The protein localises to the secreted. The sequence is that of Otoraplin (OTOR) from Homo sapiens (Human).